Here is an 876-residue protein sequence, read N- to C-terminus: Probable LRR receptor-like protein kinase At1g51890 (876 aa).

Positions methionine 1 to alanine 19 are cleaved as a signal peptide. At glutamine 20 to alanine 500 the chain is on the extracellular side. 13 N-linked (GlcNAc...) asparagine glycosylation sites follow: asparagine 45, asparagine 90, asparagine 138, asparagine 177, asparagine 251, asparagine 259, asparagine 284, asparagine 290, asparagine 327, asparagine 335, asparagine 397, asparagine 412, and asparagine 417. LRR repeat units follow at residues glutamine 407–threonine 430, histidine 431–methionine 453, and asparagine 455–glutamine 476. Residues asparagine 455, asparagine 460, asparagine 468, asparagine 481, and asparagine 494 are each glycosylated (N-linked (GlcNAc...) asparagine). Residues isoleucine 501–valine 521 traverse the membrane as a helical segment. At isoleucine 522–serine 872 the chain is on the cytoplasmic side. The residue at position 561 (threonine 561) is a Phosphothreonine. The region spanning lysine 570–leucine 842 is the Protein kinase domain. Residues leucine 576–valine 584 and lysine 597 contribute to the ATP site. At tyrosine 642 the chain carries Phosphotyrosine. The active-site Proton acceptor is aspartate 694. Phosphothreonine is present on residues threonine 729 and threonine 734. The residue at position 742 (tyrosine 742) is a Phosphotyrosine.

It belongs to the protein kinase superfamily. Ser/Thr protein kinase family.

The protein localises to the cell membrane. The enzyme catalyses L-seryl-[protein] + ATP = O-phospho-L-seryl-[protein] + ADP + H(+). It carries out the reaction L-threonyl-[protein] + ATP = O-phospho-L-threonyl-[protein] + ADP + H(+). The protein is Probable LRR receptor-like protein kinase At1g51890 of Arabidopsis thaliana (Mouse-ear cress).